The primary structure comprises 213 residues: Andrastin A biosynthesis cluster protein B (213 aa).

Functionally, part of the gene cluster that mediates the biosynthesis of andrastins, meroterpenoid compounds that exhibit inhibitory activity against ras farnesyltransferase, suggesting that they could be promising leads for antitumor agents. The first step of the pathway is the synthesis of 3,5-dimethylorsellinic acid (DMOA) by the polyketide synthase adrD via condensation of one acetyl-CoA starter unit with 3 malonyl-CoA units and 2 methylations. DMAO is then converted to farnesyl-DMAO by the prenyltransferase adrG. The methyltransferase adrK catalyzes the methylation of the carboxyl group of farnesyl-DMAO to farnesyl-DMAO methyl ester which is further converted to epoxyfarnesyl-DMAO methyl ester by the FAD-dependent monooxygenase adrH. The terpene cyclase adrI then catalyzes the carbon skeletal rearrangement to generate the andrastin E, the first compound in the pathway having the andrastin scaffold, with the tetracyclic ring system. The post-cyclization tailoring enzymes adrF, adrE, adrJ, and adrA, are involved in the conversion of andrastin E into andrastin A. The short chain dehydrogenase adrF is responsible for the oxidation of the C-3 a hydroxyl group of andrastin E to yield the corresponding ketone, andrastin D. The ketoreductase adrE stereoselectively reduces the carbonyl moiety to reverse the stereochemistry of the C-3 position to yield andrastin F. The acetyltransferase adrJ is the acetyltransferase that attaches the acetyl group to the C-3 hydroxyl group of andrastin F to yield andrastin C. Finally, the cytochrome P450 monooxygenase adrA catalyzes two sequential oxidation reactions of the C-23 methyl group, to generate the corresponding alcohol andrastin B, and aldehyde andrastin A. The protein is Andrastin A biosynthesis cluster protein B of Penicillium rubens (strain ATCC 28089 / DSM 1075 / NRRL 1951 / Wisconsin 54-1255) (Penicillium chrysogenum).